The sequence spans 524 residues: Glutamyl-tRNA(Gln) amidotransferase subunit A, mitochondrial (524 aa).

Catalysis depends on charge relay system residues K76 and S171. The active-site Acyl-ester intermediate is S195.

The protein belongs to the amidase family. GatA subfamily. In terms of assembly, subunit of the heterotrimeric GatCAB amidotransferase (AdT) complex, composed of A (qrsl1), B (gatb) and C (gatc) subunits.

Its subcellular location is the mitochondrion. It catalyses the reaction L-glutamyl-tRNA(Gln) + L-glutamine + ATP + H2O = L-glutaminyl-tRNA(Gln) + L-glutamate + ADP + phosphate + H(+). Allows the formation of correctly charged Gln-tRNA(Gln) through the transamidation of misacylated Glu-tRNA(Gln) in the mitochondria. The reaction takes place in the presence of glutamine and ATP through an activated gamma-phospho-Glu-tRNA(Gln). In Xenopus laevis (African clawed frog), this protein is Glutamyl-tRNA(Gln) amidotransferase subunit A, mitochondrial (qrsl1).